Reading from the N-terminus, the 156-residue chain is Large ribosomal subunit protein bL9 (156 aa).

It belongs to the bacterial ribosomal protein bL9 family.

Functionally, binds to the 23S rRNA. The polypeptide is Large ribosomal subunit protein bL9 (Treponema pallidum (strain Nichols)).